The chain runs to 118 residues: Large ribosomal subunit protein bL20 (118 aa).

It belongs to the bacterial ribosomal protein bL20 family.

Its function is as follows. Binds directly to 23S ribosomal RNA and is necessary for the in vitro assembly process of the 50S ribosomal subunit. It is not involved in the protein synthesizing functions of that subunit. This is Large ribosomal subunit protein bL20 from Desulfotalea psychrophila (strain LSv54 / DSM 12343).